Consider the following 203-residue polypeptide: V-type ATP synthase subunit D (203 aa).

The protein belongs to the V-ATPase D subunit family.

Functionally, produces ATP from ADP in the presence of a proton gradient across the membrane. This chain is V-type ATP synthase subunit D (atpD), found in Chlamydia muridarum (strain MoPn / Nigg).